We begin with the raw amino-acid sequence, 1380 residues long: DNA-directed RNA polymerase subunit beta (1380 aa).

This sequence belongs to the RNA polymerase beta chain family. In terms of assembly, the RNAP catalytic core consists of 2 alpha, 1 beta, 1 beta' and 1 omega subunit. When a sigma factor is associated with the core the holoenzyme is formed, which can initiate transcription.

It catalyses the reaction RNA(n) + a ribonucleoside 5'-triphosphate = RNA(n+1) + diphosphate. DNA-dependent RNA polymerase catalyzes the transcription of DNA into RNA using the four ribonucleoside triphosphates as substrates. In Nitrobacter hamburgensis (strain DSM 10229 / NCIMB 13809 / X14), this protein is DNA-directed RNA polymerase subunit beta.